The following is a 144-amino-acid chain: Arginine decarboxylase proenzyme (144 aa).

Ser-80 acts as the Schiff-base intermediate with substrate; via pyruvic acid in catalysis. Ser-80 is modified (pyruvic acid (Ser); by autocatalysis). His-85 (proton acceptor; for processing activity) is an active-site residue. Cys-100 serves as the catalytic Proton donor; for catalytic activity.

Belongs to the prokaryotic AdoMetDC family. Type 1 subfamily. As to quaternary structure, heterooctamer of four alpha and four beta chains arranged as a tetramer of alpha/beta heterodimers. Pyruvate is required as a cofactor. Post-translationally, is synthesized initially as an inactive proenzyme. Formation of the active enzyme involves a self-maturation process in which the active site pyruvoyl group is generated from an internal serine residue via an autocatalytic post-translational modification. Two non-identical subunits are generated from the proenzyme in this reaction, and the pyruvate is formed at the N-terminus of the alpha chain, which is derived from the carboxyl end of the proenzyme. The post-translation cleavage follows an unusual pathway, termed non-hydrolytic serinolysis, in which the side chain hydroxyl group of the serine supplies its oxygen atom to form the C-terminus of the beta chain, while the remainder of the serine residue undergoes an oxidative deamination to produce ammonia and the pyruvoyl group blocking the N-terminus of the alpha chain.

The catalysed reaction is L-arginine + H(+) = agmatine + CO2. It participates in amine and polyamine biosynthesis; agmatine biosynthesis; agmatine from L-arginine: step 1/1. Its function is as follows. Specifically catalyzes the decarboxylation of L-arginine to agmatine. Has no S-adenosylmethionine decarboxylase (AdoMetDC) activity. The polypeptide is Arginine decarboxylase proenzyme (Ignicoccus hospitalis (strain KIN4/I / DSM 18386 / JCM 14125)).